A 262-amino-acid polypeptide reads, in one-letter code: Ribosomal RNA small subunit methyltransferase A (262 aa).

The S-adenosyl-L-methionine site is built by asparagine 12, leucine 14, glycine 38, glutamate 60, aspartate 83, and asparagine 102.

It belongs to the class I-like SAM-binding methyltransferase superfamily. rRNA adenine N(6)-methyltransferase family. RsmA subfamily.

The protein localises to the cytoplasm. The catalysed reaction is adenosine(1518)/adenosine(1519) in 16S rRNA + 4 S-adenosyl-L-methionine = N(6)-dimethyladenosine(1518)/N(6)-dimethyladenosine(1519) in 16S rRNA + 4 S-adenosyl-L-homocysteine + 4 H(+). Specifically dimethylates two adjacent adenosines (A1518 and A1519) in the loop of a conserved hairpin near the 3'-end of 16S rRNA in the 30S particle. May play a critical role in biogenesis of 30S subunits. The polypeptide is Ribosomal RNA small subunit methyltransferase A (Pelagibacter ubique (strain HTCC1062)).